The sequence spans 361 residues: Putative agmatine deiminase (361 aa).

The active-site Amidino-cysteine intermediate is the Cys-354.

The protein belongs to the agmatine deiminase family.

It carries out the reaction agmatine + H2O = N-carbamoylputrescine + NH4(+). The protein is Putative agmatine deiminase of Streptococcus pneumoniae (strain 70585).